The chain runs to 335 residues: G-protein coupled receptor 157 (335 aa).

The Extracellular segment spans residues 1 to 15; sequence MQPSPPPTELVPSER. The chain crosses the membrane as a helical span at residues 16 to 36; sequence AVVLLSCALSALGSGLLVATH. The Cytoplasmic segment spans residues 37 to 48; the sequence is ALWPDLRSRARR. Residues 49 to 69 form a helical membrane-spanning segment; that stretch reads LLLFLSLADLLSAASYFYGVL. Residues 70 to 87 are Extracellular-facing; that stretch reads QNFAGPSWDCVLQGALST. A helical transmembrane segment spans residues 88–108; that stretch reads FANTSSFFWTVAIALYLYLSI. The Cytoplasmic segment spans residues 109 to 119; the sequence is VRAARGPRTDR. A helical membrane pass occupies residues 120–140; the sequence is LLWAFHVVSWGVPLVITVAAV. The Extracellular portion of the chain corresponds to 141–166; the sequence is ALKKIGYDASDVSVGWCWIDLEAKDH. The chain crosses the membrane as a helical span at residues 167–187; the sequence is VLWMLLTGKLWEMLAYVLLPL. The Cytoplasmic segment spans residues 188-226; that stretch reads LYLLVRKHINRAHTALSEYRPILSQEHRLLRHSSMADKK. A helical transmembrane segment spans residues 227 to 247; it reads LVLIPLIFIGLRVWSTVRFVL. Residues 248–258 are Extracellular-facing; sequence TLCGSPAVQTP. The chain crosses the membrane as a helical span at residues 259–279; sequence VLVVLHGIGNTFQGGANCIMF. The Cytoplasmic portion of the chain corresponds to 280-335; the sequence is VLCTRAVRTRLFSLCCCCCSSQPPTKSPAGTPKAPAPSKPGESQESQGTPGELPST. A disordered region spans residues 300–335; the sequence is SQPPTKSPAGTPKAPAPSKPGESQESQGTPGELPST. Polar residues predominate over residues 320 to 335; that stretch reads GESQESQGTPGELPST.

This sequence belongs to the G-protein coupled receptor 2 family.

The protein resides in the cell projection. It localises to the cilium membrane. Functionally, orphan receptor that promotes neuronal differentiation of radial glial progenitors (RGPs). The activity of this receptor is mediated by a G(q)-protein that activates a phosphatidylinositol-calcium second messenger. In Homo sapiens (Human), this protein is G-protein coupled receptor 157 (GPR157).